The primary structure comprises 254 residues: Enolase-phosphatase E1 (254 aa).

The Mg(2+) site is built by D13 and E15. Residues 127-128 and K173 contribute to the substrate site; that span reads SS. Residue D200 participates in Mg(2+) binding.

Belongs to the HAD-like hydrolase superfamily. MasA/MtnC family. In terms of assembly, monomer. It depends on Mg(2+) as a cofactor.

The protein resides in the cytoplasm. It localises to the nucleus. The catalysed reaction is 5-methylsulfanyl-2,3-dioxopentyl phosphate + H2O = 1,2-dihydroxy-5-(methylsulfanyl)pent-1-en-3-one + phosphate. It participates in amino-acid biosynthesis; L-methionine biosynthesis via salvage pathway; L-methionine from S-methyl-5-thio-alpha-D-ribose 1-phosphate: step 3/6. It functions in the pathway amino-acid biosynthesis; L-methionine biosynthesis via salvage pathway; L-methionine from S-methyl-5-thio-alpha-D-ribose 1-phosphate: step 4/6. Bifunctional enzyme that catalyzes the enolization of 2,3-diketo-5-methylthiopentyl-1-phosphate (DK-MTP-1-P) into the intermediate 2-hydroxy-3-keto-5-methylthiopentenyl-1-phosphate (HK-MTPenyl-1-P), which is then dephosphorylated to form the acireductone 1,2-dihydroxy-3-keto-5-methylthiopentene (DHK-MTPene). The polypeptide is Enolase-phosphatase E1 (utr4) (Sclerotinia sclerotiorum (strain ATCC 18683 / 1980 / Ss-1) (White mold)).